An 82-amino-acid chain; its full sequence is MDFTMSLVAGLIAIGAGIAVGFGAIGSGIGQGIAAGKAFEAMARQPEVRGTVQTFLIIALAFMETLTIYGLVIAFMLLNKMS.

2 helical membrane passes run 5–25 and 55–75; these read MSLV…FGAI and FLII…VIAF.

It belongs to the ATPase C chain family. As to quaternary structure, F-type ATPases have 2 components, F(1) - the catalytic core - and F(0) - the membrane proton channel. F(1) has five subunits: alpha(3), beta(3), gamma(1), delta(1), epsilon(1). F(0) has three main subunits: a(1), b(2) and c(10-14). The alpha and beta chains form an alternating ring which encloses part of the gamma chain. F(1) is attached to F(0) by a central stalk formed by the gamma and epsilon chains, while a peripheral stalk is formed by the delta and b chains.

The protein resides in the cell membrane. Functionally, f(1)F(0) ATP synthase produces ATP from ADP in the presence of a proton or sodium gradient. F-type ATPases consist of two structural domains, F(1) containing the extramembraneous catalytic core and F(0) containing the membrane proton channel, linked together by a central stalk and a peripheral stalk. During catalysis, ATP synthesis in the catalytic domain of F(1) is coupled via a rotary mechanism of the central stalk subunits to proton translocation. In terms of biological role, key component of the F(0) channel; it plays a direct role in translocation across the membrane. A homomeric c-ring of between 10-14 subunits forms the central stalk rotor element with the F(1) delta and epsilon subunits. This chain is ATP synthase subunit c, found in Carboxydothermus hydrogenoformans (strain ATCC BAA-161 / DSM 6008 / Z-2901).